The chain runs to 162 residues: UPF0114 protein PSPA7_5214 (162 aa).

3 helical membrane-spanning segments follow: residues 15–35 (LLAP…IKFF), 53–73 (LILV…LVMV), and 136–156 (LMWY…MGYL).

Belongs to the UPF0114 family.

It localises to the cell membrane. In Pseudomonas paraeruginosa (strain DSM 24068 / PA7) (Pseudomonas aeruginosa (strain PA7)), this protein is UPF0114 protein PSPA7_5214.